We begin with the raw amino-acid sequence, 432 residues long: Serine hydroxymethyltransferase (432 aa).

(6S)-5,6,7,8-tetrahydrofolate-binding positions include Leu117 and Gly121–Leu123. Lys226 is subject to N6-(pyridoxal phosphate)lysine. Ser366–Phe368 lines the (6S)-5,6,7,8-tetrahydrofolate pocket.

Belongs to the SHMT family. As to quaternary structure, homodimer. It depends on pyridoxal 5'-phosphate as a cofactor.

The protein localises to the cytoplasm. It carries out the reaction (6R)-5,10-methylene-5,6,7,8-tetrahydrofolate + glycine + H2O = (6S)-5,6,7,8-tetrahydrofolate + L-serine. The protein operates within one-carbon metabolism; tetrahydrofolate interconversion. It participates in amino-acid biosynthesis; glycine biosynthesis; glycine from L-serine: step 1/1. Its function is as follows. Catalyzes the reversible interconversion of serine and glycine with tetrahydrofolate (THF) serving as the one-carbon carrier. This reaction serves as the major source of one-carbon groups required for the biosynthesis of purines, thymidylate, methionine, and other important biomolecules. Also exhibits THF-independent aldolase activity toward beta-hydroxyamino acids, producing glycine and aldehydes, via a retro-aldol mechanism. The polypeptide is Serine hydroxymethyltransferase (Salinibacter ruber (strain DSM 13855 / M31)).